Here is a 642-residue protein sequence, read N- to C-terminus: uncharacterized protein (642 aa).

The Cytoplasmic portion of the chain corresponds to 1 to 15 (MVHITLGQAIWVSVK). Residues 16–36 (PIIKIYLIIGVGFLMAKMGIL) form a helical membrane-spanning segment. At 37-42 (TVEATR) the chain is on the extracellular side. A helical transmembrane segment spans residues 43-63 (IISDIVLTVLLPSLSFNKIVA). Residues 64-73 (NIEDKDIKSV) lie on the Cytoplasmic side of the membrane. A helical membrane pass occupies residues 74–94 (GIICLSALLIFGSGFFFAYVV). Over 95 to 104 (RLFLPVPKQW) the chain is Extracellular. Residues 105–125 (YGGILAGGMFPNISDLPIAYL) traverse the membrane as a helical segment. The Cytoplasmic portion of the chain corresponds to 126–142 (QSMDQGLVFSEEEGNKG). The helical transmembrane segment at 143–163 (VANVIIFLTMFLICIFNLGGF) threads the bilayer. Residues 164–460 (RLIESDFEYN…FLKNCLRPCS (297 aa)) lie on the Extracellular side of the membrane. Disordered regions lie at residues 183–206 (ETTK…RFFS) and 227–324 (GTKG…SQPR). Composition is skewed to polar residues over residues 240–260 (RRST…NSKI) and 272–312 (IACT…SSID). The helical transmembrane segment at 461–481 (MAVIIALTVAFIPWVKALFVT) threads the bilayer. Residues 482–499 (TANTPHISQAPDNAPPLS) are Cytoplasmic-facing. The chain crosses the membrane as a helical span at residues 500-520 (FFMDFTGYVGAACVPFGLILL). Over 521-538 (GATLGRLKIGNLYPGFWK) the chain is Extracellular. A helical transmembrane segment spans residues 539–559 (AAVTLVILRQCVMPIFGVLWC). Residues 560-574 (DRLVKAGWVNWQDDR) are Cytoplasmic-facing. The helical transmembrane segment at 575 to 595 (MLLFVIAISWNLPTMTTLIYF) threads the bilayer. Residues 596–614 (TASFTPPETTAPIQMECVS) are Extracellular-facing. Residues 615 to 635 (FFLMLQYPLMVVSLPFLVSYF) traverse the membrane as a helical segment. The Cytoplasmic segment spans residues 636–642 (LKVQMNL).

It belongs to the auxin efflux carrier (TC 2.A.69) family.

It localises to the membrane. This is an uncharacterized protein from Saccharomyces cerevisiae (strain ATCC 204508 / S288c) (Baker's yeast).